We begin with the raw amino-acid sequence, 805 residues long: Transcription factor SFL1 (805 aa).

The span at 1 to 24 shows a compositional bias: low complexity; it reads MSHLVSSSLGTTTTATPTSRSPHT. A disordered region spans residues 1-110; it reads MSHLVSSSLG…NNNVSNNNST (110 aa). The span at 25–69 shows a compositional bias: polar residues; the sequence is NHSTPYNQNSITSNRSSPVPKNSVNSRIIPQTMNPPIDMKSNNIL. A compositionally biased stretch (basic and acidic residues) spans 71-85; it reads PEKDTDTSRGDHSES. A compositionally biased stretch (low complexity) spans 86–110; that stretch reads KASSISSASGTTTTNNNNVSNNNST. Residues 117–226 mediate DNA binding; the sequence is FIHKLYDMLH…LKNIKRRSSK (110 aa). Disordered stretches follow at residues 273–336, 438–483, 513–675, 691–746, and 759–805; these read MQSP…NQSP, QSNF…VAPQ, REDS…PAPQ, HQKS…SENH, and VSEL…RKLE. Residues 295-310 are compositionally biased toward low complexity; sequence QQQQQQQQQQQQQQQQ. Polar residues-rich tracts occupy residues 454–480 and 533–556; these read HGNS…NLNV and PSRN…NFNP. Residues 557 to 566 are compositionally biased toward low complexity; sequence QQSQSQSQVQ. Polar residues-rich tracts occupy residues 581–597, 604–614, and 622–635; these read ESTY…SQIL, VNHSPLVQQQQ, and NDSS…SSLP. Residues 637-659 show a composition bias toward low complexity; sequence TRPLSRQQQQQQQTLHHPSTTSS. The span at 716–738 shows a compositional bias: polar residues; the sequence is PISSTAPTTMITSTSKPTSTSGA.

This sequence belongs to the HSF family.

The protein localises to the nucleus. Functionally, transcription factor that plays a role of repressor of filamentous growth and flocculation. Antagonizes functions of SFL2 and FLO8. Plays a role in the hyphal repression induced by secreted factors like dodecanol by competitors such as Pseudomonas aeruginosa and Burkholderia cenocepacia. The protein is Transcription factor SFL1 (SFL1) of Candida albicans (strain SC5314 / ATCC MYA-2876) (Yeast).